The primary structure comprises 578 residues: L-ascorbate oxidase (578 aa).

An N-terminal signal peptide occupies residues 1-28 (MASLGFLFFFLLPLILLELSSSRSVMAA). Plastocyanin-like domains are found at residues 30–149 (TRHF…LIVE) and 161–328 (DGEF…NYLP). Cu cation is bound by residues His87, His89, His131, and His133. 2 disulfides stabilise this stretch: Cys108–Cys565 and Cys207–Cys221. Asn206 is a glycosylation site (N-linked (GlcNAc...) asparagine). Residues Asn349, Asn394, Asn438, and Asn451 are each glycosylated (N-linked (GlcNAc...) asparagine). The region spanning 372-550 (HRRIILLNTQ…HMGMGVIFAE (179 aa)) is the Plastocyanin-like 3 domain. Residues His472, His475, His477, His533, Cys534, His535, His539, and Met544 each coordinate Cu cation.

It belongs to the multicopper oxidase family. As to quaternary structure, dimer. The cofactor is Cu cation. As to expression, highly expressed in young and growing tissues.

It localises to the secreted. It carries out the reaction 4 L-ascorbate + O2 = 4 monodehydro-L-ascorbate radical + 2 H2O. In terms of biological role, may be involved in a redox system involving ascorbic acid. This Nicotiana tabacum (Common tobacco) protein is L-ascorbate oxidase (AAO).